A 191-amino-acid chain; its full sequence is Guanylate kinase (191 aa).

The Guanylate kinase-like domain maps to 10–188 (GQLIVLTGPS…ALHRLVKLIG (179 aa)). ATP is bound at residue 17–24 (GPSGVGKG).

The protein belongs to the guanylate kinase family.

The protein localises to the cytoplasm. The catalysed reaction is GMP + ATP = GDP + ADP. In terms of biological role, essential for recycling GMP and indirectly, cGMP. The protein is Guanylate kinase (gmk) of Synechocystis sp. (strain ATCC 27184 / PCC 6803 / Kazusa).